Reading from the N-terminus, the 468-residue chain is 6-phosphogluconate dehydrogenase, NAD(+)-dependent, decarboxylating (468 aa).

NAD(+)-binding positions include 9–14, 32–34, 73–75, and Asn-101; these read GLGVMG, NYT, and VTA. Substrate-binding positions include Asn-101 and 127–129; that span reads SGG. Lys-181 acts as the Proton acceptor in catalysis. 184-185 is a substrate binding site; it reads HN. The active-site Proton donor is the Glu-188. 5 residues coordinate substrate: Tyr-189, Lys-259, Arg-286, Arg-445, and His-451.

This sequence belongs to the 6-phosphogluconate dehydrogenase family. As to quaternary structure, homodimer.

It catalyses the reaction 6-phospho-D-gluconate + NAD(+) = D-ribulose 5-phosphate + CO2 + NADH. Functionally, catalyzes the oxidative decarboxylation of 6-phosphogluconate to ribulose 5-phosphate and CO(2), with concomitant reduction of NAD to NADH. Does not contribute to oxidative pentose phosphate (PP) pathway fluxes during growth on glucose. The functional role of GntZ remains obscure. The chain is 6-phosphogluconate dehydrogenase, NAD(+)-dependent, decarboxylating (gntZ) from Bacillus subtilis (strain 168).